The following is a 492-amino-acid chain: Aspartyl/glutamyl-tRNA(Asn/Gln) amidotransferase subunit B (492 aa).

Belongs to the GatB/GatE family. GatB subfamily. Heterotrimer of A, B and C subunits.

It catalyses the reaction L-glutamyl-tRNA(Gln) + L-glutamine + ATP + H2O = L-glutaminyl-tRNA(Gln) + L-glutamate + ADP + phosphate + H(+). The catalysed reaction is L-aspartyl-tRNA(Asn) + L-glutamine + ATP + H2O = L-asparaginyl-tRNA(Asn) + L-glutamate + ADP + phosphate + 2 H(+). In terms of biological role, allows the formation of correctly charged Asn-tRNA(Asn) or Gln-tRNA(Gln) through the transamidation of misacylated Asp-tRNA(Asn) or Glu-tRNA(Gln) in organisms which lack either or both of asparaginyl-tRNA or glutaminyl-tRNA synthetases. The reaction takes place in the presence of glutamine and ATP through an activated phospho-Asp-tRNA(Asn) or phospho-Glu-tRNA(Gln). In Azorhizobium caulinodans (strain ATCC 43989 / DSM 5975 / JCM 20966 / LMG 6465 / NBRC 14845 / NCIMB 13405 / ORS 571), this protein is Aspartyl/glutamyl-tRNA(Asn/Gln) amidotransferase subunit B.